The chain runs to 49 residues: uncharacterized protein (49 aa).

This is an uncharacterized protein from Enterobacteria phage T4 (Bacteriophage T4).